The primary structure comprises 261 residues: MAHQAHSYHMVDPSPWPIFGATAALLTTSGLIMWFHYNSLYLLTLGLLSMFLVMIQWWRDIVRESTFQGHHTPTVQKGLRYGMILFITSEAFFFLGFFWAFFHSSLAPTPELGAQWPPTGINPLNPLEVPLLNTAILLASGVTVTWAHHSITESNRKQAIHALSLTIILGFYFTALQAMEYHEASFSIADGVYGSTFFVATGFHGLHVIIGSSFLTVCLLRLIKFHFTTNHHFGFEAAAWYWHFVDVIWLFLYMSIYWWGS.

The Mitochondrial matrix portion of the chain corresponds to 1-15; the sequence is MAHQAHSYHMVDPSP. Residues 16-34 form a helical membrane-spanning segment; that stretch reads WPIFGATAALLTTSGLIMW. The Mitochondrial intermembrane portion of the chain corresponds to 35 to 40; it reads FHYNSL. A helical transmembrane segment spans residues 41 to 66; that stretch reads YLLTLGLLSMFLVMIQWWRDIVREST. At 67–72 the chain is on the mitochondrial matrix side; sequence FQGHHT. Residues 73 to 105 traverse the membrane as a helical segment; sequence PTVQKGLRYGMILFITSEAFFFLGFFWAFFHSS. Topologically, residues 106–128 are mitochondrial intermembrane; that stretch reads LAPTPELGAQWPPTGINPLNPLE. Residues 129 to 152 form a helical membrane-spanning segment; that stretch reads VPLLNTAILLASGVTVTWAHHSIT. Topologically, residues 153 to 155 are mitochondrial matrix; that stretch reads ESN. A helical transmembrane segment spans residues 156-183; sequence RKQAIHALSLTIILGFYFTALQAMEYHE. At 184-190 the chain is on the mitochondrial intermembrane side; it reads ASFSIAD. A helical membrane pass occupies residues 191 to 223; the sequence is GVYGSTFFVATGFHGLHVIIGSSFLTVCLLRLI. At 224–232 the chain is on the mitochondrial matrix side; sequence KFHFTTNHH. The helical transmembrane segment at 233-256 threads the bilayer; sequence FGFEAAAWYWHFVDVIWLFLYMSI. Over 257 to 261 the chain is Mitochondrial intermembrane; sequence YWWGS.

It belongs to the cytochrome c oxidase subunit 3 family. Component of the cytochrome c oxidase (complex IV, CIV), a multisubunit enzyme composed of 14 subunits. The complex is composed of a catalytic core of 3 subunits MT-CO1, MT-CO2 and MT-CO3, encoded in the mitochondrial DNA, and 11 supernumerary subunits COX4I, COX5A, COX5B, COX6A, COX6B, COX6C, COX7A, COX7B, COX7C, COX8 and NDUFA4, which are encoded in the nuclear genome. The complex exists as a monomer or a dimer and forms supercomplexes (SCs) in the inner mitochondrial membrane with NADH-ubiquinone oxidoreductase (complex I, CI) and ubiquinol-cytochrome c oxidoreductase (cytochrome b-c1 complex, complex III, CIII), resulting in different assemblies (supercomplex SCI(1)III(2)IV(1) and megacomplex MCI(2)III(2)IV(2)).

The protein localises to the mitochondrion inner membrane. It catalyses the reaction 4 Fe(II)-[cytochrome c] + O2 + 8 H(+)(in) = 4 Fe(III)-[cytochrome c] + 2 H2O + 4 H(+)(out). In terms of biological role, component of the cytochrome c oxidase, the last enzyme in the mitochondrial electron transport chain which drives oxidative phosphorylation. The respiratory chain contains 3 multisubunit complexes succinate dehydrogenase (complex II, CII), ubiquinol-cytochrome c oxidoreductase (cytochrome b-c1 complex, complex III, CIII) and cytochrome c oxidase (complex IV, CIV), that cooperate to transfer electrons derived from NADH and succinate to molecular oxygen, creating an electrochemical gradient over the inner membrane that drives transmembrane transport and the ATP synthase. Cytochrome c oxidase is the component of the respiratory chain that catalyzes the reduction of oxygen to water. Electrons originating from reduced cytochrome c in the intermembrane space (IMS) are transferred via the dinuclear copper A center (CU(A)) of subunit 2 and heme A of subunit 1 to the active site in subunit 1, a binuclear center (BNC) formed by heme A3 and copper B (CU(B)). The BNC reduces molecular oxygen to 2 water molecules using 4 electrons from cytochrome c in the IMS and 4 protons from the mitochondrial matrix. This is Cytochrome c oxidase subunit 3 (MT-CO3) from Struthio camelus (Common ostrich).